Here is a 130-residue protein sequence, read N- to C-terminus: uncharacterized protein (130 aa).

This is an uncharacterized protein from Treponema pallidum (strain Nichols).